An 823-amino-acid polypeptide reads, in one-letter code: MDNTYNPQEVEEQAQQYWHKKQSFNVTEDLNKEKFYCLSMFPYPSGTLHMGHVRNYTLGDVIARYQRALGKNVLQPIGWDSFGLPAENAAIKNKIPPAEWTRKNIAAMKEQFLRLGNAYDWKREITTCDPEYYRWEQWFFIRLFEKGLVYKKNAVVNWDPVDQTVLANEQVVDGRGWRSGALVERKEISQWFIKITSYADELLSSLDSLDEWPAQVKQMQRNWIGKSIGTEIYFNVNNYPKRLKIYTTRPDTLMGATYLAVATDHPLAKEAASNNKKVQEFLDSCQGIKIAEAELATMEKRGIDTGMTAIHPITGKELPIWVANFVLMQYGSGAVMAVPAHDQRDWEFAQKYQLPVKQVIKPIGIEHDFNQSAYTEEGILINSNQFDNLLSSKAIQVITNFLEENDAGKATINYRLRDWGVSRQRYWGTPIPMIICEQCGIVPVPDEELPVVLPENVDFTGTGSPLTQCKEFVNITCPKCGQDATRETDTFDTFVESSWYYARFACKGQENAMLDDRAKYWTPVDQYIGGIEHAVMHLLYARFFHKLMRDEGLVNSDEPFKALLTQGMVLKDGHKMSKSLGNVVDPNHLINTYGADTARLFVMFASPPEQSLEWSDSGVEGAHRFLKRVWAFSHQHRDMLIDINDSILSGNGHVDWKEAESRLKKSRHIVHQILAQATHDYDRNQFNTVVSGCMKLFNEISDYSIETENDKFFIHSSISILLRLLAPITPHICHCLWQQLGFDKAIIDAPWPKVDKSALKTDEVDYVVQVNGKLRAQFTASTDATEEELIAAAKEHAHNFVVNHTIKKAIIVPHRQLINLVIG.

The short motif at P42–H52 is the 'HIGH' region element. The 'KMSKS' region motif lies at K575–S579. K578 lines the ATP pocket.

Belongs to the class-I aminoacyl-tRNA synthetase family.

It is found in the cytoplasm. It catalyses the reaction tRNA(Leu) + L-leucine + ATP = L-leucyl-tRNA(Leu) + AMP + diphosphate. This Legionella pneumophila (strain Lens) protein is Leucine--tRNA ligase.